A 157-amino-acid chain; its full sequence is Succinate dehydrogenase assembly factor 2-A, mitochondrial (157 aa).

Residues 1–21 constitute a mitochondrion transit peptide; the sequence is MLRQVLSSTSVRRLLVSPTRC.

It belongs to the SDHAF2 family. As to quaternary structure, interacts with the flavoprotein subunit within the SDH catalytic dimer.

The protein localises to the mitochondrion matrix. In terms of biological role, plays an essential role in the assembly of succinate dehydrogenase (SDH), an enzyme complex (also referred to as respiratory complex II) that is a component of both the tricarboxylic acid (TCA) cycle and the mitochondrial electron transport chain, and which couples the oxidation of succinate to fumarate with the reduction of ubiquinone (coenzyme Q) to ubiquinol. Required for flavinylation (covalent attachment of FAD) of the flavoprotein subunit of the SDH catalytic dimer. The chain is Succinate dehydrogenase assembly factor 2-A, mitochondrial from Drosophila mojavensis (Fruit fly).